A 420-amino-acid chain; its full sequence is Pyrophosphate--fructose 6-phosphate 1-phosphotransferase (420 aa).

Gly13 lines the diphosphate pocket. Residues Thr142–Asp144, Met190–Arg192, Glu247, and Tyr297–Arg300 each bind substrate. The Proton acceptor role is filled by Asp144.

It belongs to the phosphofructokinase type A (PFKA) family. PPi-dependent PFK group II subfamily. Clade 'B2' sub-subfamily. As to quaternary structure, homodimer. It depends on Mg(2+) as a cofactor. Co(2+) is required as a cofactor. Mn(2+) serves as cofactor.

Its subcellular location is the cytoplasm. It catalyses the reaction beta-D-fructose 6-phosphate + diphosphate = beta-D-fructose 1,6-bisphosphate + phosphate + H(+). Its pathway is carbohydrate degradation; glycolysis; D-glyceraldehyde 3-phosphate and glycerone phosphate from D-glucose: step 3/4. Its activity is regulated as follows. Non-allosteric. In terms of biological role, catalyzes the phosphorylation of D-fructose 6-phosphate, the first committing step of glycolysis. Uses inorganic phosphate (PPi) as phosphoryl donor instead of ATP like common ATP-dependent phosphofructokinases (ATP-PFKs), which renders the reaction reversible, and can thus function both in glycolysis and gluconeogenesis. Consistently, PPi-PFK can replace the enzymes of both the forward (ATP-PFK) and reverse (fructose-bisphosphatase (FBPase)) reactions. This Methylococcus capsulatus (strain ATCC 33009 / NCIMB 11132 / Bath) protein is Pyrophosphate--fructose 6-phosphate 1-phosphotransferase.